The primary structure comprises 208 residues: FMN-dependent NADH:quinone oxidoreductase (208 aa).

FMN is bound by residues S9, 15 to 17 (SAS), 96 to 99 (MYNF), and 140 to 143 (TRGG).

It belongs to the azoreductase type 1 family. Homodimer. Requires FMN as cofactor.

It carries out the reaction 2 a quinone + NADH + H(+) = 2 a 1,4-benzosemiquinone + NAD(+). The catalysed reaction is N,N-dimethyl-1,4-phenylenediamine + anthranilate + 2 NAD(+) = 2-(4-dimethylaminophenyl)diazenylbenzoate + 2 NADH + 2 H(+). In terms of biological role, quinone reductase that provides resistance to thiol-specific stress caused by electrophilic quinones. Its function is as follows. Also exhibits azoreductase activity. Catalyzes the reductive cleavage of the azo bond in aromatic azo compounds to the corresponding amines. This Ralstonia nicotianae (strain ATCC BAA-1114 / GMI1000) (Ralstonia solanacearum) protein is FMN-dependent NADH:quinone oxidoreductase.